Consider the following 220-residue polypeptide: Aspartic protease inhibitor 2 (220 aa).

Positions Met-1–Thr-23 are cleaved as a signal peptide. The propeptide occupies Ser-24–Ser-32. A Vacuolar targeting signal motif is present at residues Asn-26–Pro-31. An N-linked (GlcNAc...) asparagine glycan is attached at Asn-51. Disulfide bonds link Cys-80-Cys-125 and Cys-174-Cys-185.

This sequence belongs to the protease inhibitor I3 (leguminous Kunitz-type inhibitor) family. Tubers.

The protein localises to the vacuole. Functionally, inhibitor of cathepsin D (aspartic protease). May also inhibit trypsin and chymotrypsin (serine proteases). Protects the plant by inhibiting proteases of invading organisms. This Solanum tuberosum (Potato) protein is Aspartic protease inhibitor 2.